Here is a 131-residue protein sequence, read N- to C-terminus: MKKHGVLNSEIAAVLASLGHTDTIVIADCGLPIPDGVKRIDLAVEIGKPSFLDVLQVVADDMAIEKVMLAEEVIINNAEVNKEVEMRLIEPAFEYVSHKEFKEHTKRAKAIIRTGEATPYANVILHAGVIF.

Catalysis depends on His-20, which acts as the Proton donor. Residues Asp-28, His-98, and 120 to 122 (YAN) contribute to the substrate site.

This sequence belongs to the RbsD / FucU family. RbsD subfamily. As to quaternary structure, homodecamer.

It localises to the cytoplasm. It carries out the reaction beta-D-ribopyranose = beta-D-ribofuranose. Its pathway is carbohydrate metabolism; D-ribose degradation; D-ribose 5-phosphate from beta-D-ribopyranose: step 1/2. Catalyzes the interconversion of beta-pyran and beta-furan forms of D-ribose. This Bacillus mycoides (strain KBAB4) (Bacillus weihenstephanensis) protein is D-ribose pyranase.